The chain runs to 280 residues: Probable cell division protein WhiA (280 aa).

The segment at residues 247–279 (SLEQIANFFFTKYNIKISRSGIQHFSVNLKKLC) is a DNA-binding region (H-T-H motif).

This sequence belongs to the WhiA family.

Involved in cell division and chromosome segregation. This is Probable cell division protein WhiA from Mycoplasma genitalium (strain ATCC 33530 / DSM 19775 / NCTC 10195 / G37) (Mycoplasmoides genitalium).